Here is a 574-residue protein sequence, read N- to C-terminus: Serine hydroxymethyltransferase (574 aa).

180–182 (GHL) contacts (6S)-5,6,7,8-tetrahydrofolate. An N6-(pyridoxal phosphate)lysine modification is found at Lys288. Position 306 (Glu306) interacts with (6S)-5,6,7,8-tetrahydrofolate.

This sequence belongs to the SHMT family. As to quaternary structure, homodimer. Pyridoxal 5'-phosphate serves as cofactor.

It is found in the cytoplasm. The catalysed reaction is (6R)-5,10-methylene-5,6,7,8-tetrahydrofolate + glycine + H2O = (6S)-5,6,7,8-tetrahydrofolate + L-serine. Its pathway is one-carbon metabolism; tetrahydrofolate interconversion. The protein operates within amino-acid biosynthesis; glycine biosynthesis; glycine from L-serine: step 1/1. Its function is as follows. Catalyzes the reversible interconversion of serine and glycine with tetrahydrofolate (THF) serving as the one-carbon carrier. This reaction serves as the major source of one-carbon groups required for the biosynthesis of purines, thymidylate, methionine, and other important biomolecules. Also exhibits THF-independent aldolase activity toward beta-hydroxyamino acids, producing glycine and aldehydes, via a retro-aldol mechanism. This chain is Serine hydroxymethyltransferase, found in Treponema pallidum (strain Nichols).